Consider the following 132-residue polypeptide: Large ribosomal subunit protein uL14 (132 aa).

This sequence belongs to the universal ribosomal protein uL14 family. In terms of assembly, part of the 50S ribosomal subunit. Forms a cluster with proteins L3 and L24e, part of which may contact the 16S rRNA in 2 intersubunit bridges.

Its function is as follows. Binds to 23S rRNA. Forms part of two intersubunit bridges in the 70S ribosome. This Methanococcus maripaludis (strain C5 / ATCC BAA-1333) protein is Large ribosomal subunit protein uL14.